The sequence spans 437 residues: Protein farnesyltransferase subunit beta (437 aa).

5 PFTB repeats span residues 123–164, 174–215, 222–263, 270–312, and 332–374; these read ATDV…CIIG, REKL…SLTN, FEGT…VILK, LKSL…PLLH, and QQAL…SIAQ. (2E,6E)-farnesyl diphosphate-binding positions include 248–251 and 291–294; these read HGGY and RCNK. Positions 297 and 299 each coordinate Zn(2+). 300-303 provides a ligand contact to (2E,6E)-farnesyl diphosphate; sequence YSFW. His362 lines the Zn(2+) pocket. At Thr436 the chain carries Phosphothreonine.

The protein belongs to the protein prenyltransferase subunit beta family. As to quaternary structure, heterodimer of FNTA and FNTB. Zn(2+) is required as a cofactor.

It carries out the reaction L-cysteinyl-[protein] + (2E,6E)-farnesyl diphosphate = S-(2E,6E)-farnesyl-L-cysteinyl-[protein] + diphosphate. Functionally, essential subunit of the farnesyltransferase complex. Catalyzes the transfer of a farnesyl moiety from farnesyl diphosphate to a cysteine at the fourth position from the C-terminus of several proteins having the C-terminal sequence Cys-aliphatic-aliphatic-X. The sequence is that of Protein farnesyltransferase subunit beta (FNTB) from Homo sapiens (Human).